The chain runs to 112 residues: Tetracenomycin-F1 monooxygenase (112 aa).

An ABM domain is found at 11-100; the sequence is FTLVNVFGVA…SRPKPIFCEV (90 aa).

As to quaternary structure, homotrimer.

The catalysed reaction is tetracenomycin F1 + O2 = tetracenomycin D3 + H2O + H(+). Its pathway is antibiotic biosynthesis; tetracenomycin C biosynthesis. With respect to regulation, inhibited by p-chloromercuribenzoic acid, N-ethylmaleimide and diethyl pyrocarbonate. Functionally, oxygenase required for conversion of tetracenomycin F1 to tetracenomycin D3. This is Tetracenomycin-F1 monooxygenase (tcmH) from Streptomyces glaucescens.